The primary structure comprises 421 residues: Acetate kinase (421 aa).

Mg(2+) is bound at residue N7. Position 14 (K14) interacts with ATP. R91 is a binding site for substrate. The Proton donor/acceptor role is filled by D148. Residues 208-212 (HIGNG) and 283-285 (DRR) contribute to the ATP site. E387 serves as a coordination point for Mg(2+).

The protein belongs to the acetokinase family. Homodimer. It depends on Mg(2+) as a cofactor. Mn(2+) is required as a cofactor.

It localises to the cytoplasm. The enzyme catalyses acetate + ATP = acetyl phosphate + ADP. Its pathway is metabolic intermediate biosynthesis; acetyl-CoA biosynthesis; acetyl-CoA from acetate: step 1/2. In terms of biological role, catalyzes the formation of acetyl phosphate from acetate and ATP. Can also catalyze the reverse reaction. The polypeptide is Acetate kinase (Geobacter metallireducens (strain ATCC 53774 / DSM 7210 / GS-15)).